The sequence spans 928 residues: BCAS3 microtubule associated cell migration factor (928 aa).

N-acetylmethionine is present on Met-1. Residues 69 to 114 (DLNDTSRNLEFHEIHSTGNEPPLLIMIGYSDGMQVWSIPISGEAQE) form a WD repeat. Lys-215 participates in a covalent cross-link: Glycyl lysine isopeptide (Lys-Gly) (interchain with G-Cter in SUMO1); alternate. Lys-215 participates in a covalent cross-link: Glycyl lysine isopeptide (Lys-Gly) (interchain with G-Cter in SUMO2); alternate. Required for recruitment to preautophagosomal structure in response to mitophagy stretches follow at residues 254-312 (RGGA…SRRS) and 437-560 (YGGQ…IKAP). Ser-461, Ser-480, and Ser-488 each carry phosphoserine. 2 disordered regions span residues 472–515 (TSKQ…PGNP) and 755–777 (TTVISSSSSVLQSHGPSDTPQPL). 3 stretches are compositionally biased toward low complexity: residues 480–494 (SPVPGLSSSPSGSPL), 505–514 (NNFTNNNPGN), and 755–771 (TTVISSSSSVLQSHGPS). Phosphoserine occurs at positions 838, 886, and 898. The segment at 868-928 (ESPSRDVVGS…PLSLFPTGFP (61 aa)) is disordered. Residues 887–901 (IETLSNSSGSTSGSI) are compositionally biased toward low complexity.

This sequence belongs to the BCAS3 family. In terms of assembly, interacts with histone H3, ESR1, KAT2B and PELP1; the interactions occur in a estrogen-dependent manner. Interacts with beta-tubulin and VIM. Interacts (via C-terminal) with PHAF1; the interaction is requrired for the association with the phagophore. Expressed in stomach, liver, lung, kidney, prostate, testis, thyroid gland, adrenal gland, brain, heart, skeletal muscle, colon, spleen, small intestine, placenta, blood leukocyte and mammary epithelial cells. Expressed in undifferentiated ES cells. Expressed in blood islands and nascent blood vessels derived from differentiated ES cells into embryoid bodies (BD). Expressed in endothelial cells. Not detected in brain. Expressed in brain tumors (at protein level). Expressed in brain. Highly expressed in breast cancers and in glioma cell lines.

The protein resides in the nucleus. The protein localises to the cytoplasm. It localises to the cytoskeleton. It is found in the preautophagosomal structure. Its function is as follows. Plays a role in angiogenesis. Participates in the regulation of cell polarity and directional endothelial cell migration by mediating both the activation and recruitment of CDC42 and the reorganization of the actin cytoskeleton at the cell leading edge. Promotes filipodia formation. Functions synergistically with PELP1 as a transcriptional coactivator of estrogen receptor-responsive genes. Stimulates histone acetyltransferase activity. Binds to chromatin. Plays a regulatory role in autophagic activity. In complex with PHAF1, associates with the preautophagosomal structure during both non-selective and selective autophagy. Probably binds phosphatidylinositol 3-phosphate (PtdIns3P) which would mediate the recruitment preautophagosomal structures. The sequence is that of BCAS3 microtubule associated cell migration factor from Homo sapiens (Human).